The primary structure comprises 431 residues: uncharacterized protein (431 aa).

Disordered stretches follow at residues 17–66 (VDPE…GQQA) and 81–415 (GSVT…ALPR). Basic and acidic residues predominate over residues 91 to 106 (DKADREPAARPRDPRS). A compositionally biased stretch (basic residues) spans 173–195 (TYRRRRPTAATPSRKKKARRGPK). Positions 235–244 (RTPGPVHSAA) are enriched in low complexity. Positions 299–312 (RMGGSSGGRGGTPG) are enriched in gly residues. A compositionally biased stretch (low complexity) spans 317–342 (RAAPGARPTAPDGAPGRWDGPADGPA). Gly residues predominate over residues 343–360 (PGLGRGGWGVGREAGGSG).

This is an uncharacterized protein from Homo sapiens (Human).